A 98-amino-acid polypeptide reads, in one-letter code: Endoribonuclease antitoxin GhoS (98 aa).

As to quaternary structure, monomer. Post-translationally, unlike other TA antitoxins, this protein is stable.

In terms of biological role, antitoxin component of a type V toxin-antitoxin (TA) system. Neutralizes the toxic effects of toxin GhoT by digesting ghoT transcripts in a sequence-specific manner. In concert with GhoT is involved in reducing cell growth during antibacterial stress. This chain is Endoribonuclease antitoxin GhoS, found in Escherichia coli O157:H7.